The primary structure comprises 239 residues: RNA polymerase sigma factor FliA (239 aa).

A sigma-70 factor domain-2 region spans residues L16–W88. The Interaction with polymerase core subunit RpoC signature appears at D43 to Q46. Positions N96–Q166 are sigma-70 factor domain-3. The interval A185 to R233 is sigma-70 factor domain-4. A DNA-binding region (H-T-H motif) is located at residues L207–S226.

The protein belongs to the sigma-70 factor family. FliA subfamily.

The protein resides in the cytoplasm. In terms of biological role, sigma factors are initiation factors that promote the attachment of RNA polymerase to specific initiation sites and are then released. This sigma factor controls the expression of flagella-related genes. The chain is RNA polymerase sigma factor FliA from Salmonella typhi.